The chain runs to 1147 residues: Nitric oxide synthase, inducible (1147 aa).

Positions 22–51 (KDINNNVEKTPGAIPSPTTQDDPKSHKHQN) are disordered. The DINNN-motif; mediates interaction with SPSB1, SPSB2 and SPSB4 signature appears at 23–27 (DINNN). The Zn(2+) site is built by cysteine 107 and cysteine 112. Serine 115 is a binding site for (6R)-L-erythro-5,6,7,8-tetrahydrobiopterin. Cysteine 197 contributes to the heme b binding site. Glutamine 260, tryptophan 369, tyrosine 370, and glutamate 374 together coordinate L-arginine. Positions 378, 459, 460, and 473 each coordinate (6R)-L-erythro-5,6,7,8-tetrahydrobiopterin. Residue tyrosine 488 participates in heme b binding. Residues 512-532 (FTVLVKAVFFASVLMRKVMAS) are calmodulin-binding. The Flavodoxin-like domain maps to 536–674 (ATVLFATETG…AFRSWAVQTF (139 aa)). FMN-binding residues include threonine 542, glutamate 543, threonine 544, lysine 546, and serine 547. The residue at position 564 (threonine 564) is a Phosphothreonine. Tyrosine 572 bears the Phosphotyrosine mark. Positions 588, 589, 625, 632, 658, and 662 each coordinate FMN. An FAD-binding FR-type domain is found at 727–967 (KNVFTMRLKS…VRSVSGFQLP (241 aa)). An NADP(+)-binding site is contributed by arginine 747. Residues histidine 769, arginine 903, tyrosine 905, serine 906, threonine 921, and alanine 923 each coordinate FAD. Threonine 926 is an NADP(+) binding site. Residues tyrosine 927, valine 940, cysteine 941, and serine 942 each coordinate FAD. Residues threonine 981, arginine 1014, serine 1043, arginine 1044, lysine 1050, tyrosine 1052, glutamine 1054, and aspartate 1087 each contribute to the NADP(+) site.

This sequence belongs to the NOS family. As to quaternary structure, homodimer. Interacts with NHERF1. Interacts with GAPDH; induced by oxidatively-modified low-densitity lipoprotein (LDL(ox)). Interacts with S100A8 and S100A9 to form the iNOS-S100A8/9 transnitrosylase complex. Interacts with SPSB1, SPSB2 and SPSB4. Interacts with ELOC and CUL5 in the presence of SPSB1 or SPSB2 or SPSB4. Forms a complex with ASL, ASS1 and HSP90AA1; the complex regulates cell-autonomous L-arginine synthesis and citrulline recycling while channeling extracellular L-arginine to nitric oxide synthesis pathway. Requires heme b as cofactor. FAD serves as cofactor. FMN is required as a cofactor. The cofactor is (6R)-L-erythro-5,6,7,8-tetrahydrobiopterin. Post-translationally, polyubiquitinated; mediated by SPSB1, SPSB2 and SPSB4, leading to proteasomal degradation. As to expression, in normal kidney, expressed primarily in the medullary thick ascending limb, with minor amounts in the medullary collecting duct and vasa recta bundle.

It is found in the cytoplasm. The protein resides in the cytosol. The catalysed reaction is 2 L-arginine + 3 NADPH + 4 O2 + H(+) = 2 L-citrulline + 2 nitric oxide + 3 NADP(+) + 4 H2O. With respect to regulation, not stimulated by calcium/calmodulin. Aspirin inhibits expression and function of this enzyme and effects may be exerted at the level of translational/post-translational modification and directly on the catalytic activity. Produces nitric oxide (NO) which is a messenger molecule with diverse functions throughout the body. In macrophages, NO mediates tumoricidal and bactericidal actions. Also has nitrosylase activity and mediates cysteine S-nitrosylation of cytoplasmic target proteins such PTGS2/COX2. As component of the iNOS-S100A8/9 transnitrosylase complex involved in the selective inflammatory stimulus-dependent S-nitrosylation of GAPDH implicated in regulation of the GAIT complex activity and probably multiple targets including ANXA5, EZR, MSN and VIM. Involved in inflammation, enhances the synthesis of pro-inflammatory mediators such as IL6 and IL8. The chain is Nitric oxide synthase, inducible (Nos2) from Rattus norvegicus (Rat).